A 126-amino-acid polypeptide reads, in one-letter code: Holo-[acyl-carrier-protein] synthase (126 aa).

Asp9 and Glu58 together coordinate Mg(2+).

This sequence belongs to the P-Pant transferase superfamily. AcpS family. As to quaternary structure, homodimer. It depends on Mg(2+) as a cofactor.

The protein localises to the cytoplasm. It carries out the reaction apo-[ACP] + CoA = holo-[ACP] + adenosine 3',5'-bisphosphate + H(+). Functionally, transfers the 4'-phosphopantetheine moiety from coenzyme A to the 'Ser-36' of acyl-carrier-protein. The sequence is that of Holo-[acyl-carrier-protein] synthase from Escherichia coli O157:H7.